The sequence spans 119 residues: Large ribosomal subunit protein uL18 (119 aa).

It belongs to the universal ribosomal protein uL18 family. In terms of assembly, part of the 50S ribosomal subunit; part of the 5S rRNA/L5/L18/L25 subcomplex. Contacts the 5S and 23S rRNAs.

This is one of the proteins that bind and probably mediate the attachment of the 5S RNA into the large ribosomal subunit, where it forms part of the central protuberance. The protein is Large ribosomal subunit protein uL18 of Anaeromyxobacter dehalogenans (strain 2CP-1 / ATCC BAA-258).